The chain runs to 207 residues: Large ribosomal subunit protein bL9 (207 aa).

The span at 162–176 shows a compositional bias: basic and acidic residues; the sequence is QKKEEKAKDEVSATE. The tract at residues 162–207 is disordered; sequence QKKEEKAKDEVSATEKDEELMLSSVTNDNDGDGAKEIVVEGTEESQ.

The protein belongs to the bacterial ribosomal protein bL9 family.

In terms of biological role, binds to the 23S rRNA. The protein is Large ribosomal subunit protein bL9 of Ehrlichia ruminantium (strain Gardel).